A 392-amino-acid polypeptide reads, in one-letter code: Sex-determining region Y protein (392 aa).

The segment at 4–81 (HVKRPMNAFM…YKYQPHRRAK (78 aa)) is sufficient for interaction with KPNB1. Residues 5–73 (VKRPMNAFMV…LHREKYPNYK (69 aa)) constitute a DNA-binding region (HMG box). 2 required for nuclear localization regions span residues 6–22 (KRPM…ERHK) and 75–81 (QPHRRAK). Residues 52 to 84 (RPFFQEAQRLKILHREKYPNYKYQPHRRAKVSQ) are sufficient for interaction with EP300. Lysine 81 is modified (N6-acetyllysine). A necessary for interaction with ZNF208 isoform KRAB-O region spans residues 92-144 (AVASTKLYNLLQWDRNPHAITYRQDWSRAAHLYSKNQQSFYWQPVDIPTGHLQ). The interval 94 to 138 (ASTKLYNLLQWDRNPHAITYRQDWSRAAHLYSKNQQSFYWQPVDI) is necessary for interaction with SLC9A3R2 and nuclear accumulation of SLC9A3R2. The segment at 142-361 (HLQQQQQQQQ…QQQQQQQQQQ (220 aa)) is disordered. A compositionally biased stretch (low complexity) spans 144–181 (QQQQQQQQQQQFHNHHQQQQQFYDHHQQQQQQQQQQQQ). Composition is skewed to basic and acidic residues over residues 182-197 (FHDH…DHHQ) and 210-228 (QEQQ…HDHQ). The segment covering 229–238 (QQQQQQQQQQ) has biased composition (low complexity). Composition is skewed to basic and acidic residues over residues 239 to 250 (FHDHHQQKQQFH), 261 to 295 (FHDH…HDHP), and 313 to 349 (QFHD…DHHQ). Residues 350 to 361 (QQQQQQQQQQQQ) are compositionally biased toward low complexity.

The protein belongs to the SRY family. In terms of assembly, interacts with KPNB1, ZNF208 isoform KRAB-O, PARP1 and SLC9A3R2. The interaction with KPNB1 is sensitive to dissociation by Ran in the GTP-bound form. Interaction with PARP1 impaired its DNA-binding activity. Interacts with CALM, EP300, HDAC3 and WT1. The interaction with EP300 modulates its DNA-binding activity. In terms of processing, degraded due to the presence of a degron at the C-terminus that promotes its degradation. Post-translationally, phosphorylated on serine residues by PKA. Phosphorylation by PKA enhances its DNA-binding activity and stimulates transcription repression. Acetylation of Lys-81 contributes to its nuclear localization and enhances its interaction with KPNB1. In terms of processing, poly-ADP-ribosylated by PARP1. ADP-ribosylation reduces its DNA-binding activity. Expressed in gonadal somatic pre-Sertoli cells. Expressed in the substantia nigra of the brain (at protein level). Expressed in diencephalon, cortex, the substantia nigra of the midbrain and the medial mammillary bodies of the hypothalamus of male, but not female. As to expression, expressed in gonadal somatic pre-Sertoli cells. While it is expressed at lower level compared to isoform Sry-S, this form is more stable and constitutes the predominant protein product of the Sry locus in XY gonads (at protein level).

It is found in the nucleus speckle. The protein resides in the cytoplasm. Its subcellular location is the nucleus. Transcriptional regulator that controls a genetic switch in male development. It is necessary and sufficient for initiating male sex determination by directing the development of supporting cell precursors (pre-Sertoli cells) as Sertoli rather than granulosa cells. Involved in different aspects of gene regulation including promoter activation or repression. Binds to the DNA consensus sequence 5'-[AT]AACAA[AT]-3'. SRY HMG box recognizes DNA by partial intercalation in the minor groove and promotes DNA bending. Also involved in pre-mRNA splicing. In male adult brain involved in the maintenance of motor functions of dopaminergic neurons. Functionally, constitutes the major isoform, which is necessary and sufficient for initiating male sex determination. Its function is as follows. Constitutes a minor isoform, which is unstable due to the presence of a degron at the C-terminus that promotes its degradation. Not necessary and sufficient for initiating male sex determination. The chain is Sex-determining region Y protein from Mus musculus (Mouse).